The following is a 542-amino-acid chain: Prolyl 3-hydroxylase OGFOD1 (542 aa).

Positions D134–G239 constitute a Fe2OG dioxygenase domain. 2 residues coordinate Fe cation: H155 and D157. Y169 contributes to the 2-oxoglutarate binding site. Residue H218 coordinates Fe cation. R230 contacts 2-oxoglutarate. The disordered stretch occupies residues S371–C435. Residues S395–G417 show a composition bias toward polar residues.

It belongs to the TPA1 family. Monomer. Fe(2+) is required as a cofactor. The cofactor is L-ascorbate.

The protein resides in the cytoplasm. It is found in the nucleus. It carries out the reaction [ribosomal protein uS12]-L-proline + 2-oxoglutarate + O2 = [ribosomal protein uS12]-(3S)-3-hydroxy-L-proline + succinate + CO2. In terms of biological role, prolyl 3-hydroxylase that catalyzes 3-hydroxylation of 'Pro-62' of small ribosomal subunit uS12 (RPS23), thereby regulating protein translation termination efficiency. Involved in stress granule formation. The polypeptide is Prolyl 3-hydroxylase OGFOD1 (OGFOD1) (Bos taurus (Bovine)).